Consider the following 92-residue polypeptide: Small ribosomal subunit protein uS19 (92 aa).

Functionally, protein S19 forms a complex with S13 that binds strongly to the 16S ribosomal RNA. This Rhodopseudomonas palustris (strain ATCC BAA-98 / CGA009) protein is Small ribosomal subunit protein uS19.